The sequence spans 228 residues: Ribosomal RNA small subunit methyltransferase G (228 aa).

S-adenosyl-L-methionine-binding positions include Gly92, Phe97, 115 to 117 (EAT), 143 to 144 (AE), and Arg156.

This sequence belongs to the methyltransferase superfamily. RNA methyltransferase RsmG family.

The protein localises to the cytoplasm. In terms of biological role, specifically methylates the N7 position of a guanine in 16S rRNA. In Thermosynechococcus vestitus (strain NIES-2133 / IAM M-273 / BP-1), this protein is Ribosomal RNA small subunit methyltransferase G.